The following is a 148-amino-acid chain: Gas vesicle protein J (148 aa).

Disordered stretches follow at residues 1-21 and 118-148; these read MTTT…VIPT and EETT…QLEA. Residues 136–148 are compositionally biased toward polar residues; the sequence is VNSQEGDNSQLEA.

This sequence belongs to the gas vesicle GvpA family. In terms of assembly, interacts with GvpA.

It localises to the gas vesicle. Functionally, a minor component of the gas vesicle, might be involved in nucleating gas vesicle formation. Gas vesicles (GV) are hollow, gas filled proteinaceous nanostructures. During planktonic growth they allow positioning of the organism at a favorable depth for light or nutrient acquisition. In terms of biological role, cluster expression in E.coli (gvpA1-gvpA2-gvpC-gvpN-gvpJ-gvpK-gvpF-gvpG-gvpV-gvpW) allows cells to float and produces irregularly shaped gas vesicles. This is Gas vesicle protein J from Nostoc sp. (strain PCC 7120 / SAG 25.82 / UTEX 2576).